Here is a 254-residue protein sequence, read N- to C-terminus: UPF0603 protein YdjH (254 aa).

The signal sequence occupies residues 1–29; that stretch reads MRGFFGKAIFVVLAVFIMMPLLGIEAVRA. The helical transmembrane segment at 166–186 threads the bilayer; that stretch reads IFFTWWFQLIAAIAVGGIAVS. The span at 223–235 shows a compositional bias: basic and acidic residues; the sequence is VTRERKPSDKDSG. A disordered region spans residues 223-254; that stretch reads VTRERKPSDKDSGSDGGVTKGGTSYSGSRGSF. Positions 243–254 are enriched in polar residues; that stretch reads GGTSYSGSRGSF.

The protein belongs to the UPF0603 family.

The protein localises to the cell membrane. This chain is UPF0603 protein YdjH (ydjH), found in Bacillus subtilis (strain 168).